A 446-amino-acid polypeptide reads, in one-letter code: D(1A) dopamine receptor (446 aa).

Residues 1–23 (MRTLNTSTMDGTGLVVERDFSFR) are Extracellular-facing. Asn-5 is a glycosylation site (N-linked (GlcNAc...) asparagine). Residues 24-49 (ILTACFLSLLILSTLLGNTLVCAAVI) form a helical membrane-spanning segment. At 50–60 (RFRHLRSKVTN) the chain is on the cytoplasmic side. A helical membrane pass occupies residues 61–87 (FFVISLAVSDLLVAVLVMPWKAVAEIA). The Extracellular portion of the chain corresponds to 88–96 (GFWPFGSFC). Cysteines 96 and 186 form a disulfide. A helical membrane pass occupies residues 97 to 119 (NIWVAFDIMCSTASILNLCVISV). Topologically, residues 120 to 138 (DRYWAISSPFRYERKMTPK) are cytoplasmic. The chain crosses the membrane as a helical span at residues 139 to 163 (AAFILISVAWTLSVLISFIPVQLSW). Topologically, residues 164–192 (HKAKPTSPSDGNVTSLGKTTHNCDSSLSR) are extracellular. The helical transmembrane segment at 193 to 218 (TYAISSSLISFYIPVAIMIVTYTRIY) threads the bilayer. At 219-272 (RIAQKQIRRISALERAAVHAKNCQTTAGNGNPAECSQPESSFKMSFKRETKVLK) the chain is on the cytoplasmic side. The chain crosses the membrane as a helical span at residues 273-299 (TLSVIMGVFVCCWLPFFILNCMVPFCG). The Extracellular segment spans residues 300–312 (SGETKPFCIDSIT). Residues 313–337 (FDVFVWFGWANSSLNPIIYAFNADF) traverse the membrane as a helical segment. At 338 to 446 (RKAFSTLLGC…PITQNGQHPT (109 aa)) the chain is on the cytoplasmic side. Residues Cys-347 and Cys-351 are each lipidated (S-palmitoyl cysteine).

Belongs to the G-protein coupled receptor 1 family. In terms of assembly, interacts with DNAJC14 via its C-terminus. Interacts with DRD2. Interacts with DORIP1.

The protein resides in the cell membrane. It is found in the endoplasmic reticulum membrane. It localises to the cell projection. The protein localises to the cilium membrane. Its subcellular location is the dendrite. The protein resides in the dendritic spine. Functionally, dopamine receptor whose activity is mediated by G proteins which activate adenylyl cyclase. The polypeptide is D(1A) dopamine receptor (DRD1) (Sus scrofa (Pig)).